We begin with the raw amino-acid sequence, 593 residues long: Inactive metallocarboxypeptidase ECM14 (593 aa).

A signal peptide spans 1-22; the sequence is MHFSVRLSLLLTLASSLPLVSA. A propeptide spanning residues 23–184 is cleaved from the precursor; it reads IPQHEDQAYT…QTIYESYPKT (162 aa). The segment at 180 to 210 is disordered; that stretch reads SYPKTNPSSPSQQGPTTRRFSPSASTSKTKP. Residues 182 to 210 are compositionally biased toward polar residues; the sequence is PKTNPSSPSQQGPTTRRFSPSASTSKTKP. A Peptidase M14 domain is found at 220–546; the sequence is DYQPLSVLLP…RAMVAMGKFL (327 aa). Zn(2+) contacts are provided by H285 and E288. Substrate-binding positions include 285–288, R343, and 360–361; these read HARE and DH. Cysteines 354 and 377 form a disulfide. N-linked (GlcNAc...) asparagine glycosylation occurs at N370. H417 is a Zn(2+) binding site. A substrate-binding site is contributed by 418–419; that stretch reads SY. Residues 557–593 form a disordered region; that stretch reads NGPHAAEETQNYDDDFEEDEAEEDSDVFRAQGDDMSS. Positions 566 to 581 are enriched in acidic residues; sequence QNYDDDFEEDEAEEDS.

It belongs to the peptidase M14 family. It depends on Zn(2+) as a cofactor.

The protein localises to the vacuole. It is found in the secreted. Functionally, inactive carboxypeptidase that may play a role in cell wall organization and biogenesis. This chain is Inactive metallocarboxypeptidase ECM14 (ECM14), found in Arthroderma gypseum (strain ATCC MYA-4604 / CBS 118893) (Microsporum gypseum).